The following is a 393-amino-acid chain: Phosphoenolpyruvate/phosphate translocator 3, chloroplastic (393 aa).

Residues 1–65 constitute a chloroplast transit peptide; the sequence is MQRAAAASRA…LSGGRAVTAR (65 aa). A run of 7 helical transmembrane segments spans residues 89–109, 124–144, 164–183, 195–217, 232–249, 270–290, and 362–382; these read LAET…NIYF, YTIT…MWAL, AAGH…KVAV, FFTV…LGSL, LSFN…NLLY, INLF…LMLF, and TPIS…VFLY. The region spanning 123–228 is the EamA domain; sequence PYTITAFQLA…PIVGGVALAS (106 aa).

It belongs to the TPT transporter family. PPT (TC 2.A.7.9) subfamily.

It is found in the plastid. The protein localises to the chloroplast membrane. Functionally, phosphoenolpyruvate/phosphate translocator that transports phosphoenolpyruvate (PEP) and dihydroxyacetone phosphate. The polypeptide is Phosphoenolpyruvate/phosphate translocator 3, chloroplastic (PPT3) (Oryza sativa subsp. japonica (Rice)).